The primary structure comprises 117 residues: Large ribosomal subunit protein uL18 (117 aa).

It belongs to the universal ribosomal protein uL18 family. As to quaternary structure, part of the 50S ribosomal subunit; part of the 5S rRNA/L5/L18/L25 subcomplex. Contacts the 5S and 23S rRNAs.

Its function is as follows. This is one of the proteins that bind and probably mediate the attachment of the 5S RNA into the large ribosomal subunit, where it forms part of the central protuberance. The chain is Large ribosomal subunit protein uL18 from Aliivibrio fischeri (strain ATCC 700601 / ES114) (Vibrio fischeri).